The following is a 297-amino-acid chain: MRPELSQYKHLSAGKVREIYEIDDKHILMVASDRISAYDFILDTEIPDKGRVLTAMSQFFFDTIDFPNHLAGPADDPRIPEEVLGRAMVCKKLNMLPFECVVRGYLTGSGLVEYKQTSSVCGVELPEGLVESSQLPEPIFTPATKADIGDHDINVSFDVVEERLGEARANQLRDASIAIYKAAAEIARDRGVILADTKFEFGIDEDGTLVLGDEVLTPDSSRYWPLEGYEAGSVQPSFDKQFVRNWLTGPKSGWDKDSGLEPPALPGSVVEATRERYIEAYELISGQKFCQWIGSCV.

Belongs to the SAICAR synthetase family.

It catalyses the reaction 5-amino-1-(5-phospho-D-ribosyl)imidazole-4-carboxylate + L-aspartate + ATP = (2S)-2-[5-amino-1-(5-phospho-beta-D-ribosyl)imidazole-4-carboxamido]succinate + ADP + phosphate + 2 H(+). The protein operates within purine metabolism; IMP biosynthesis via de novo pathway; 5-amino-1-(5-phospho-D-ribosyl)imidazole-4-carboxamide from 5-amino-1-(5-phospho-D-ribosyl)imidazole-4-carboxylate: step 1/2. In Corynebacterium glutamicum (strain ATCC 13032 / DSM 20300 / JCM 1318 / BCRC 11384 / CCUG 27702 / LMG 3730 / NBRC 12168 / NCIMB 10025 / NRRL B-2784 / 534), this protein is Phosphoribosylaminoimidazole-succinocarboxamide synthase.